The following is a 69-amino-acid chain: MARPNAAEVRQLSDTDITEQINGLRRELFQLRFQQATRQLANTHRFKEVRIKLAQLMTVQSERQRSAAS.

It belongs to the universal ribosomal protein uL29 family.

The protein is Large ribosomal subunit protein uL29 of Parasynechococcus marenigrum (strain WH8102).